A 198-amino-acid chain; its full sequence is Suppressor of cytokine signaling 2 (198 aa).

The tract at residues 1–31 (MTLRCLEPSGNGAEGTQSQWGTSGSAEEPSP) is disordered. The interval 1–75 (MTLRCLEPSG…PEGTFLIRDS (75 aa)) is interaction with AREL1. The span at 14–25 (EGTQSQWGTSGS) shows a compositional bias: polar residues. S30 and S52 each carry phosphoserine. One can recognise an SH2 domain in the interval 48–156 (WYWGSMTVNE…TVHLYLTKPL (109 aa)). An SOCS box domain is found at 151–197 (YLTKPLYTSAPPLQHLCRLTINKCTGTIWGLPLPTRLKDYLEEYKFQ). K173 participates in a covalent cross-link: Glycyl lysine isopeptide (Lys-Gly) (interchain with G-Cter in ubiquitin).

As to quaternary structure, substrate-recognition component of the ECS(SOCS2) complex, composed of SOCS2, CUL5, ELOB, ELOC and RNF7/RBX2. Interacts with IGF1R. Interacts with DCUN1D1. Ubiquitinated; mediated by AREL1 and leading to its subsequent proteasomal degradation. Ubiquitination is dependent on its phosphorylation at Ser-52, by PKC. Ubiquitination is stimulated by LPS. Post-translationally, phosphorylation at Ser-52 by PKC facilitates its ubiquitination and proteasomal degradation.

The protein resides in the cytoplasm. It participates in protein modification; protein ubiquitination. In terms of biological role, substrate-recognition component of a cullin-5-RING E3 ubiquitin-protein ligase complex (ECS complex, also named CRL5 complex), which mediates the ubiquitination and subsequent proteasomal degradation of target proteins, such as EPOR and GHR. Specifically recognizes and binds phosphorylated proteins via its SH2 domain, promoting their ubiquitination. The ECS(SOCS2) complex acts as a key regulator of growth hormone receptor (GHR) levels by mediating ubiquitination and degradation of GHR, following GHR phosphorylation by JAK2. The ECS(SOCS2) also catalyzes ubiquitination and degradation of JAK2-phosphorylated EPOR. This is Suppressor of cytokine signaling 2 (SOCS2) from Sus scrofa (Pig).